The primary structure comprises 427 residues: Histidine--tRNA ligase (427 aa).

This sequence belongs to the class-II aminoacyl-tRNA synthetase family. In terms of assembly, homodimer.

The protein resides in the cytoplasm. It carries out the reaction tRNA(His) + L-histidine + ATP = L-histidyl-tRNA(His) + AMP + diphosphate + H(+). The polypeptide is Histidine--tRNA ligase (Mannheimia succiniciproducens (strain KCTC 0769BP / MBEL55E)).